A 70-amino-acid chain; its full sequence is Cold shock-like protein CspA (70 aa).

A CSD domain is found at 7 to 67 (GSVKWFNETK…GKKGPQAAQV (61 aa)).

It localises to the cytoplasm. The polypeptide is Cold shock-like protein CspA (cspA) (Vibrio cholerae serotype O1 (strain ATCC 39315 / El Tor Inaba N16961)).